An 85-amino-acid polypeptide reads, in one-letter code: Large ribosomal subunit protein bL27 (85 aa).

A compositionally biased stretch (polar residues) spans 1 to 11 (MASKASGGSTR). Positions 1–20 (MASKASGGSTRNGRDSISKR) are disordered.

The protein belongs to the bacterial ribosomal protein bL27 family.

The protein is Large ribosomal subunit protein bL27 of Sulfurihydrogenibium sp. (strain YO3AOP1).